Reading from the N-terminus, the 344-residue chain is MLKKTLSAVAWLCIFLVAFVSHPVWPQKPPKRKTPAELTAATCCEEAKALQAQIANLSSLLSDLGKKQERDWVSVVMQVMELESSAKSMETRLTEAESKYSEMNNQIGIMQLQAAQTVTQTSADAIYDCSSLYQKNYRISGVYKLPPDDFLGSPELEVFCDMETSGGGWTIIQRRKSGLVSFYRDWKQYKQGFGSIRGDFWLGNDHIHRLSRRPTRLRVEMQDWEGNMRYAEYSHFVLGNELNSYRLFLGNYSGDVGNDALIYHNNTAFSTKDKDNDNCLDKCAQLRKGGYWYNCCTDSNLNGVYYRLGEHNKHLDGITWYGWHGSSYSLKRVEMKIRPEDFQP.

The signal sequence occupies residues 1–26 (MLKKTLSAVAWLCIFLVAFVSHPVWP). The stretch at 37–116 (ELTAATCCEE…IGIMQLQAAQ (80 aa)) forms a coiled coil. Asn-56 is a glycosylation site (N-linked (GlcNAc...) asparagine). The Fibrinogen C-terminal domain maps to 120–341 (QTSADAIYDC…RVEMKIRPED (222 aa)). Residues Cys-129 and Cys-160 are joined by a disulfide bond. N-linked (GlcNAc...) asparagine glycans are attached at residues Asn-251 and Asn-265. Cys-283 and Cys-296 are oxidised to a cystine.

As to quaternary structure, homotetramer; disulfide-linked.

It is found in the secreted. Its function is as follows. Has a role in the formation and organization of the extracellular matrix. In the eye, it functions as a mediator of dexamethasone-induced matrix deposition in the trabecular meshwork, the tissue responsible for the outflow of the ocular aqueous humor and for the maintenance of intraocular pressure. Is a negative regulator of angiogenesis in the cornea, and plays a major role in maintaining corneal avascularity and transparency. The chain is Angiopoietin-related protein 7 (ANGPTL7) from Bos taurus (Bovine).